The following is a 532-amino-acid chain: P granule abnormality protein 2 (532 aa).

As to quaternary structure, interacts with pgl-1 and pgl-3; association with either pgl-1 or pgl-3 is not required for P-granule localization. As to expression, highly expressed in the germline.

The protein localises to the cytoplasmic granule. Transient component of P-granule which is involved in germline development. This is P granule abnormality protein 2 from Caenorhabditis elegans.